The chain runs to 2206 residues: Genome polyprotein (2206 aa).

Gly2 carries N-myristoyl glycine; by host lipidation. Topologically, residues 2–1517 (GAQVSSQKVG…NINRAMTILQ (1516 aa)) are cytoplasmic. Amphipathic alpha-helix regions lie at residues 579 to 599 (GVDD…LPKP) and 579 to 603 (GVDD…QSNL). Residues His898 and Asp916 each act as for protease 2A activity in the active site. Zn(2+) contacts are provided by Cys933 and Cys935. Cys987 functions as the For protease 2A activity in the catalytic mechanism. Positions 993 and 995 each coordinate Zn(2+). The membrane-binding stretch occupies residues 1125 to 1197 (GDSWLKKFTE…HQSCPSQEHQ (73 aa)). The interval 1125 to 1263 (GDSWLKKFTE…SPGTGKSVAT (139 aa)) is oligomerization. Residues 1146 to 1150 (SNKIS) are RNA-binding. Residues 1229-1385 (EHTINNYIQF…SEYSRDGKLN (157 aa)) form the SF3 helicase domain. Residue 1253–1260 (GSPGTGKS) coordinates ATP. Positions 1393, 1396, 1405, and 1410 each coordinate Zn(2+). A C4-type zinc finger spans residues 1393 to 1410 (CKNCHQPANFKRCCPLVC). The segment at 1437–1444 (EKNRRSNI) is RNA-binding. The tract at residues 1448–1453 (MEALFQ) is oligomerization. An intramembrane segment occupies 1518-1533 (AVTTFAAVAGVVYVMY). At 1534–2206 (KLFAGHQGAY…TLYRRWLDSF (673 aa)) the chain is on the cytoplasmic side. Tyr1543 bears the O-(5'-phospho-RNA)-tyrosine mark. The Peptidase C3 domain occupies 1563-1741 (GPGFDYAVAM…FAAALKRSYF (179 aa)). Catalysis depends on for protease 3C activity residues His1602, Glu1633, and Cys1709. Positions 1972 to 2087 (EKLFAFDYTG…SYPHEVDASL (116 aa)) constitute a RdRp catalytic domain. The Mg(2+) site is built by Asp1978 and Asp2073.

This sequence belongs to the picornaviruses polyprotein family. As to quaternary structure, interacts with capsid protein VP1 and capsid protein VP3 to form heterotrimeric protomers. Interacts with capsid protein VP0, and capsid protein VP3 to form heterotrimeric protomers. Interacts with human PVR. Five protomers subsequently associate to form pentamers which serve as building blocks for the capsid. Interacts with capsid protein VP2, capsid protein VP3 and capsid protein VP4 following cleavage of capsid protein VP0. In terms of assembly, interacts with capsid protein VP1 and capsid protein VP3 in the mature capsid. As to quaternary structure, interacts with capsid protein VP0 and capsid protein VP1 to form heterotrimeric protomers. Five protomers subsequently associate to form pentamers which serve as building blocks for the capsid. Interacts with capsid protein VP4 in the mature capsid. Interacts with protein 2C; this interaction may be important for virion morphogenesis. Interacts with capsid protein VP1 and capsid protein VP3. In terms of assembly, homodimer. As to quaternary structure, homohexamer; forms a hexameric ring structure with 6-fold symmetry characteristic of AAA+ ATPases. Interacts (via N-terminus) with host RTN3 (via reticulon domain); this interaction is important for viral replication. Interacts with capsid protein VP3; this interaction may be important for virion morphogenesis. Interacts with protein 3CD. In terms of assembly, homodimer. Interacts with host GBF1. Interacts (via GOLD domain) with host ACBD3 (via GOLD domain); this interaction allows the formation of a viral protein 3A/ACBD3 heterotetramer with a 2:2 stoichiometry, which will stimulate the recruitment of host PI4KB in order to synthesize PI4P at the viral RNA replication sites. As to quaternary structure, interacts with RNA-directed RNA polymerase. Interacts with protein 3AB and with RNA-directed RNA polymerase. In terms of assembly, interacts with Viral protein genome-linked and with protein 3CD. Requires Mg(2+) as cofactor. In terms of processing, specific enzymatic cleavages in vivo by the viral proteases yield processing intermediates and the mature proteins. Post-translationally, myristoylation is required for the formation of pentamers during virus assembly. Further assembly of 12 pentamers and a molecule of genomic RNA generates the provirion. During virion maturation, immature virions are rendered infectious following cleavage of VP0 into VP4 and VP2. This maturation seems to be an autocatalytic event triggered by the presence of RNA in the capsid and it is followed by a conformational change infectious virion. In terms of processing, myristoylation is required during RNA encapsidation and formation of the mature virus particle. Post-translationally, VPg is uridylylated by the polymerase into VPg-pUpU. This acts as a nucleotide-peptide primer for the genomic RNA replication.

The protein localises to the virion. The protein resides in the host cytoplasm. It is found in the host cytoplasmic vesicle membrane. Its subcellular location is the host nucleus. The catalysed reaction is a ribonucleoside 5'-triphosphate + H2O = a ribonucleoside 5'-diphosphate + phosphate + H(+). The enzyme catalyses Selective cleavage of Tyr-|-Gly bond in the picornavirus polyprotein.. It carries out the reaction RNA(n) + a ribonucleoside 5'-triphosphate = RNA(n+1) + diphosphate. It catalyses the reaction Selective cleavage of Gln-|-Gly bond in the poliovirus polyprotein. In other picornavirus reactions Glu may be substituted for Gln, and Ser or Thr for Gly.. Its activity is regulated as follows. Replication or transcription is subject to high level of random mutations by the nucleotide analog ribavirin. In terms of biological role, forms an icosahedral capsid of pseudo T=3 symmetry with capsid proteins VP2 and VP3. The capsid is 300 Angstroms in diameter, composed of 60 copies of each capsid protein and enclosing the viral positive strand RNA genome. Capsid protein VP1 mainly forms the vertices of the capsid. Capsid protein VP1 interacts with host cell receptor PVR to provide virion attachment to target host cells. This attachment induces virion internalization predominantly through clathrin- and caveolin-independent endocytosis in Hela cells and through caveolin-mediated endocytosis in brain microvascular endothelial cells. Tyrosine kinases are probably involved in the entry process. Virus binding to PVR induces increased junctional permeability and rearrangement of junctional proteins. Modulation of endothelial tight junctions, as well as cytolytic infection of endothelial cells themselves, may result in loss of endothelial integrity which may help the virus to reach the CNS. After binding to its receptor, the capsid undergoes conformational changes. Capsid protein VP1 N-terminus (that contains an amphipathic alpha-helix) and capsid protein VP4 are externalized. Together, they shape a pore in the host membrane through which viral genome is translocated to host cell cytoplasm. Its function is as follows. Forms an icosahedral capsid of pseudo T=3 symmetry with capsid proteins VP2 and VP3. The capsid is 300 Angstroms in diameter, composed of 60 copies of each capsid protein and enclosing the viral positive strand RNA genome. Functionally, lies on the inner surface of the capsid shell. After binding to the host receptor, the capsid undergoes conformational changes. Capsid protein VP4 is released, Capsid protein VP1 N-terminus is externalized, and together, they shape a pore in the host membrane through which the viral genome is translocated into the host cell cytoplasm. Component of immature procapsids, which is cleaved into capsid proteins VP4 and VP2 after maturation. Allows the capsid to remain inactive before the maturation step. In terms of biological role, cysteine protease that cleaves viral polyprotein and specific host proteins. It is responsible for the autocatalytic cleavage between the P1 and P2 regions, which is the first cleavage occurring in the polyprotein. Also cleaves the host translation initiation factor EIF4G1, in order to shut down the capped cellular mRNA translation. Inhibits the host nucleus-cytoplasm protein and RNA trafficking by cleaving host members of the nuclear pores including NUP98, NUP62 and NUP153. Counteracts stress granule formation probably by antagonizing its assembly or promoting its dissassembly. Cleaves and inhibits host IFIH1/MDA5, thereby inhibiting the type-I IFN production and the establishment of the antiviral state. Cleaves and inhibits host MAVS, thereby inhibiting the type-I IFN production and the establishment of the antiviral state. Its function is as follows. Plays an essential role in the virus replication cycle by acting as a viroporin. Creates a pore in the host endoplasmic reticulum and as a consequence releases Ca2+ in the cytoplasm of infected cell. In turn, high levels of cytoplasmic calcium may trigger membrane trafficking and transport of viral ER-associated proteins to viroplasms, sites of viral genome replication. Functionally, induces and associates with structural rearrangements of intracellular membranes. Displays RNA-binding, nucleotide binding and NTPase activities. May play a role in virion morphogenesis and viral RNA encapsidation by interacting with the capsid protein VP3. Localizes the viral replication complex to the surface of membranous vesicles. Together with protein 3CD binds the Cis-Active RNA Element (CRE) which is involved in RNA synthesis initiation. Acts as a cofactor to stimulate the activity of 3D polymerase, maybe through a nucleid acid chaperone activity. In terms of biological role, localizes the viral replication complex to the surface of membranous vesicles. It inhibits host cell endoplasmic reticulum-to-Golgi apparatus transport and causes the disassembly of the Golgi complex, possibly through GBF1 interaction. This would result in depletion of MHC, trail receptors and IFN receptors at the host cell surface. Plays an essential role in viral RNA replication by recruiting ACBD3 and PI4KB at the viral replication sites, thereby allowing the formation of the rearranged membranous structures where viral replication takes place. Its function is as follows. Acts as a primer for viral RNA replication and remains covalently bound to viral genomic RNA. VPg is uridylylated prior to priming replication into VPg-pUpU. The oriI viral genomic sequence may act as a template for this. The VPg-pUpU is then used as primer on the genomic RNA poly(A) by the RNA-dependent RNA polymerase to replicate the viral genome. During genome replication, the VPg-RNA linkage is removed by the host TDP2, thereby accelerating replication. During the late stage of the replication cycle, host TDP2 is excluded from sites of viral RNA synthesis and encapsidation, allowing for the generation of progeny virions. Functionally, involved in the viral replication complex and viral polypeptide maturation. It exhibits protease activity with a specificity and catalytic efficiency that is different from protease 3C. Protein 3CD lacks polymerase activity. Protein 3CD binds to the 5'UTR of the viral genome. Major viral protease that mediates proteolytic processing of the polyprotein. Cleaves host EIF5B, contributing to host translation shutoff. Also cleaves host PABPC1, contributing to host translation shutoff. Cleaves host RIGI and thus contributes to the inhibition of type I interferon production. Cleaves host NLRP1, triggers host N-glycine-mediated degradation of the autoinhibitory NLRP1 N-terminal fragment. Inhibits the integrated stress response (ISR) in the infected cell by cleaving host G3BP1. Stress granule formation is thus inhibited, which allows protein synthesis and viral replication. In terms of biological role, replicates the viral genomic RNA on the surface of intracellular membranes. May form linear arrays of subunits that propagate along a strong head-to-tail interaction called interface-I. Covalently attaches UMP to a tyrosine of VPg, which is used to prime RNA synthesis. The positive stranded RNA genome is first replicated at virus induced membranous vesicles, creating a dsRNA genomic replication form. This dsRNA is then used as template to synthesize positive stranded RNA genomes. ss(+)RNA genomes are either translated, replicated or encapsidated. The sequence is that of Genome polyprotein from Poliovirus type 3 (strain 23127).